The sequence spans 368 residues: MIFKQIRRLIAAALLAALSLPAAAQPLRQLVNVEGIRDNQLIGYGIVVGLDGTGDNSQVKFSGQSVANMLKQFGLKMPEKTDTRVKNVAAVMVSASLPPGYSRGQTIDVTVSSLGDAKSLRGGTLLLTQLKAANGEVYALAQGSVVIGGLSAQGKSGSSVTVNTPTAGRIPNGASIEREIPSDFEQGDSIRLSLRRPSFETATNVVRAINRNYGKIATTRNATTIEVRAPGDPTERVAFVARLEKMNVDVGAEIPRVVFNSRTGTVVISEGVTVRPAAVSHGSLRVVISESSQVSQPGPFSNGTTQVVPDSRVQVEQGQGRMFKWPAGASLRAIIDTVNRTGATPDDVMAILQALDQAGAIDGELVVI.

The N-terminal stretch at Met1–Ala24 is a signal peptide.

The protein belongs to the FlgI family. The basal body constitutes a major portion of the flagellar organelle and consists of four rings (L,P,S, and M) mounted on a central rod.

Its subcellular location is the periplasm. The protein localises to the bacterial flagellum basal body. Assembles around the rod to form the L-ring and probably protects the motor/basal body from shearing forces during rotation. The sequence is that of Flagellar P-ring protein 1 from Chromobacterium violaceum (strain ATCC 12472 / DSM 30191 / JCM 1249 / CCUG 213 / NBRC 12614 / NCIMB 9131 / NCTC 9757 / MK).